The chain runs to 244 residues: Cytochrome c1 (244 aa).

An N-terminal signal peptide occupies residues 1-19; sequence MRKLILATFLLLAPTALLA. Heme c is bound by residues Cys-50, Cys-53, and His-54. The helical transmembrane segment at 220-240 threads the bilayer; sequence YVLLFLGFLFILAYLLKKEYW.

As to quaternary structure, the main subunits of complex b-c1 are: cytochrome b, cytochrome c1 and the Rieske protein. Post-translationally, binds 1 heme c group covalently per subunit.

The protein resides in the cell membrane. Component of the ubiquinol-cytochrome c reductase complex (complex III or cytochrome b-c1 complex), which is a respiratory chain that generates an electrochemical potential coupled to ATP synthesis. c1 functions as an electron donor to cytochrome c. The chain is Cytochrome c1 (petC) from Allochromatium vinosum (strain ATCC 17899 / DSM 180 / NBRC 103801 / NCIMB 10441 / D) (Chromatium vinosum).